A 495-amino-acid polypeptide reads, in one-letter code: Protein-serine O-palmitoleoyltransferase porcupine (495 aa).

Transmembrane regions (helical) follow at residues 46–66 (TQYI…VLIV), 92–112 (VIDH…AVQW), 184–204 (TVLS…GPWI), 232–252 (MLIH…FLLT), 358–378 (PFGT…LHGL), 403–422 (LATI…SCTV), 434–454 (VINM…GCIF), and 475–495 (TELN…YFVI). Residue histidine 376 is part of the active site.

This sequence belongs to the membrane-bound acyltransferase family. Porcupine subfamily.

The protein localises to the endoplasmic reticulum membrane. The enzyme catalyses [Wnt protein]-L-serine + (9Z)-hexadecenoyl-CoA = [Wnt protein]-O-(9Z)-hexadecenoyl-L-serine + CoA. In terms of biological role, protein-serine O-palmitoleoyltransferase that acts as a key regulator of the Wnt signaling pathway by mediating the attachment of palmitoleate, a 16-carbon monounsaturated fatty acid (C16:1(9Z)), to Wnt proteins. Serine palmitoleoylation of WNT proteins is required for efficient binding to frizzled receptors. The protein is Protein-serine O-palmitoleoyltransferase porcupine of Anopheles gambiae (African malaria mosquito).